Reading from the N-terminus, the 820-residue chain is MAGSALPLPPPPPLSLQSPSQNQTRHSSTFSPPTLTPQTPSIRSRLSKICQDGNPQLARQLFDAIPKPTTVLWNTIIIGFICNNLPHEALLFYSRMKKTAPFTNCDAYTYSSTLKACAETKNLKAGKAVHCHLIRCLQNSSRVVHNSLMNMYVSCLNAPDCFEYDVVRKVFDNMRRKNVVAWNTLISWYVKTGRNAEACRQFGIMMRMEVKPSPVSFVNVFPAVSISRSIKKANVFYGLMLKLGDEYVKDLFVVSSAISMYAELGDIESSRRVFDSCVERNIEVWNTMIGVYVQNDCLVESIELFLEAIGSKEIVSDEVTYLLAASAVSALQQVELGRQFHGFVSKNFRELPIVIVNSLMVMYSRCGSVHKSFGVFLSMRERDVVSWNTMISAFVQNGLDDEGLMLVYEMQKQGFKIDYITVTALLSAASNLRNKEIGKQTHAFLIRQGIQFEGMNSYLIDMYSKSGLIRISQKLFEGSGYAERDQATWNSMISGYTQNGHTEKTFLVFRKMLEQNIRPNAVTVASILPACSQIGSVDLGKQLHGFSIRQYLDQNVFVASALVDMYSKAGAIKYAEDMFSQTKERNSVTYTTMILGYGQHGMGERAISLFLSMQESGIKPDAITFVAVLSACSYSGLIDEGLKIFEEMREVYNIQPSSEHYCCITDMLGRVGRVNEAYEFVKGLGEEGNIAELWGSLLGSCKLHGELELAETVSERLAKFDKGKNFSGYEVLLSNMYAEEQKWKSVDKVRRGMREKGLKKEVGRSGIEIAGYVNCFVSRDQEHPHSSEIYDVIDGLAKDMRGDSFLTTLPTVTPSLELDE.

A disordered region spans residues 1 to 42; that stretch reads MAGSALPLPPPPPLSLQSPSQNQTRHSSTFSPPTLTPQTPSI. The N-terminal 50 residues, 1 to 50, are a transit peptide targeting the chloroplast; sequence MAGSALPLPPPPPLSLQSPSQNQTRHSSTFSPPTLTPQTPSIRSRLSKIC. Residues 22–42 are compositionally biased toward polar residues; sequence NQTRHSSTFSPPTLTPQTPSI. PPR repeat units lie at residues 69–99, 106–136, 141–177, 178–212, 213–247, 250–284, 285–316, 317–347, 352–382, 383–417, 418–452, 485–519, 520–550, 555–585, 586–620, 621–651, and 657–691; these read TTVL…MKKT, DAYT…LIRC, SRVV…MRRK, NVVA…EVKP, SPVS…GDEY, DLFV…NIEV, WNTM…EIVS, DEVT…VSKN, PIVI…MRER, DVVS…GFKI, DYIT…GIQF, DQAT…NIRP, NAVT…SIRQ, NVFV…TKER, NSVT…GIKP, DAIT…MREV, and SSEH…GNIA. The segment at 693–770 is type E motif; it reads LWGSLLGSCK…EVGRSGIEIA (78 aa). Positions 771 to 801 are type E(+) motif; the sequence is GYVNCFVSRDQEHPHSSEIYDVIDGLAKDMR.

It belongs to the PPR family. PCMP-E subfamily.

It is found in the plastid. The protein localises to the chloroplast. The polypeptide is Pentatricopeptide repeat-containing protein At3g22150, chloroplastic (PCMP-E95) (Arabidopsis thaliana (Mouse-ear cress)).